The chain runs to 554 residues: uncharacterized protein (554 aa).

The first 33 residues, 1–33 (MKKILIIILFIIIFIVLIYSGLWFVIMFSLSHS), serve as a signal peptide directing secretion.

This is an uncharacterized protein from Rickettsia prowazekii (strain Madrid E).